Here is a 194-residue protein sequence, read N- to C-terminus: MYQDLIRNELNKALQTLQNFLSDERHIQSIEDAAKLIADTFKAGGKVLSCGNGGSHCDAMHFAEELTGRYRENRPGYPAIAISDPSHLSCVSNDFGYEQVFSRYVEAVGNKGDVLVGISTSGNSANIIRAIDAARAKGMRVIVLTGKEGGKMAGSADVEIRVPHFGYADRIQEIHIKAIHILILLIEKEMVAQG.

Residues 37 to 194 (IADTFKAGGK…LIEKEMVAQG (158 aa)) form the SIS domain. Residue 52–54 (NGG) participates in substrate binding. Zn(2+) contacts are provided by H61 and E65. Substrate is bound by residues E65, 93–94 (ND), 119–121 (STS), S124, and Q172. 2 residues coordinate Zn(2+): Q172 and H180.

The protein belongs to the SIS family. GmhA subfamily. In terms of assembly, homotetramer. It depends on Zn(2+) as a cofactor.

The protein resides in the cytoplasm. The enzyme catalyses 2 D-sedoheptulose 7-phosphate = D-glycero-alpha-D-manno-heptose 7-phosphate + D-glycero-beta-D-manno-heptose 7-phosphate. The protein operates within carbohydrate biosynthesis; D-glycero-D-manno-heptose 7-phosphate biosynthesis; D-glycero-alpha-D-manno-heptose 7-phosphate and D-glycero-beta-D-manno-heptose 7-phosphate from sedoheptulose 7-phosphate: step 1/1. Catalyzes the isomerization of sedoheptulose 7-phosphate in D-glycero-D-manno-heptose 7-phosphate. This is Phosphoheptose isomerase from Sodalis glossinidius (strain morsitans).